Reading from the N-terminus, the 351-residue chain is Methionine import ATP-binding protein MetN (351 aa).

An ABC transporter domain is found at 2–238 (IKLNHINKTY…PKHPITRELI (237 aa)). 35–42 (GYSGAGKS) is a binding site for ATP.

The protein belongs to the ABC transporter superfamily. Methionine importer (TC 3.A.1.24) family. As to quaternary structure, the complex is composed of two ATP-binding proteins (MetN), two transmembrane proteins (MetI) and a solute-binding protein (MetQ).

It is found in the cell inner membrane. It catalyses the reaction L-methionine(out) + ATP + H2O = L-methionine(in) + ADP + phosphate + H(+). It carries out the reaction D-methionine(out) + ATP + H2O = D-methionine(in) + ADP + phosphate + H(+). Its function is as follows. Part of the ABC transporter complex MetNIQ involved in methionine import. Responsible for energy coupling to the transport system. This Helicobacter hepaticus (strain ATCC 51449 / 3B1) protein is Methionine import ATP-binding protein MetN.